Reading from the N-terminus, the 158-residue chain is Heavy metal-associated isoprenylated plant protein 23 (158 aa).

The region spanning F31 to E94 is the HMA domain. Residues C42 and C45 each coordinate a metal cation. C155 carries the post-translational modification Cysteine methyl ester. C155 carries S-farnesyl cysteine lipidation. Positions S156–M158 are cleaved as a propeptide — removed in mature form.

The protein belongs to the HIPP family. As to quaternary structure, interacts with ZHD11/HB29.

In terms of biological role, heavy-metal-binding protein. This Arabidopsis thaliana (Mouse-ear cress) protein is Heavy metal-associated isoprenylated plant protein 23.